Consider the following 367-residue polypeptide: Aldo-keto reductase AMT2 (367 aa).

D76 contacts NADP(+). The active-site Proton donor is the Y81. H173 serves as a coordination point for substrate. NADP(+) contacts are provided by residues 203–204, Q229, 258–268, and 330–338; these read SS, GPLAAGKLARP, and SSVERMDEV. The segment at 346–367 is disordered; sequence LSDEEESRLEDPYKAQPPQGHS.

This sequence belongs to the aldo/keto reductase family.

It participates in mycotoxin biosynthesis. In terms of biological role, aldo-keto reductase; part of the gene clusters that mediate the biosynthesis of AM-toxins, host-selective toxins (HSTs) causing Alternaria blotch on apple, a worldwide distributed disease. AM-toxins are cyclic depsipeptides containing the 3 residues 2-hydroxy-isovaleric acid (2-HIV), dehydroalanine, L-alanine which are common for all 3 AM-toxins I to III. The fourth precursor is L-alpha-amino-methoxyphenyl-valeric acid (L-Amv) for AM-toxin I, L-alpha-amino-phenyl-valeric acid (L-Apv) for AM-toxin II, and L-alpha-amino-hydroxyphenyl-valeric acid (L-Ahv) for AM-toxin III. AM-toxins have two target sites for affecting susceptible apple cells; they cause invagination of the plasma membrane and electrolyte loss and chloroplast disorganization. The non-ribosomal peptide synthetase AMT1 contains 4 catalytic modules and is responsible for activation of each residue in AM-toxin. The aldo-keto reductase AMT2 catalyzes the conversion of 2-keto-isovaleric acid (2-KIV) to 2-hydroxy-isovaleric acid (2-HIV), one of the precursor residues incorporated by AMT1 during AM-toxin biosynthesis, by reduction of its ketone to an alcohol. The cytochrome P450 monooxygenase AMT3 and the thioesterase AMT4 are also important for AM-toxin production, but their exact function within the AM-toxin biosynthesis are not known yet. Up to 21 proteins (including AMT1 to AMT4) are predicted to be involved in AM-toxin biosynthesis since their expression ishighly up-regulated in AM-toxin-producing cultures. This chain is Aldo-keto reductase AMT2, found in Alternaria alternata (Alternaria rot fungus).